Here is a 1179-residue protein sequence, read N- to C-terminus: Dynein axonemal assembly factor 9 (1179 aa).

Interacts with ARL3.

Its function is as follows. May act as an effector for ARL3. The polypeptide is Dynein axonemal assembly factor 9 (Mus musculus (Mouse)).